Consider the following 222-residue polypeptide: Deoxyribose-phosphate aldolase (222 aa).

Asp90 acts as the Proton donor/acceptor in catalysis. Catalysis depends on Lys152, which acts as the Schiff-base intermediate with acetaldehyde. Lys181 serves as the catalytic Proton donor/acceptor.

This sequence belongs to the DeoC/FbaB aldolase family. DeoC type 1 subfamily.

It localises to the cytoplasm. It carries out the reaction 2-deoxy-D-ribose 5-phosphate = D-glyceraldehyde 3-phosphate + acetaldehyde. It participates in carbohydrate degradation; 2-deoxy-D-ribose 1-phosphate degradation; D-glyceraldehyde 3-phosphate and acetaldehyde from 2-deoxy-alpha-D-ribose 1-phosphate: step 2/2. Its function is as follows. Catalyzes a reversible aldol reaction between acetaldehyde and D-glyceraldehyde 3-phosphate to generate 2-deoxy-D-ribose 5-phosphate. In Pectobacterium atrosepticum (strain SCRI 1043 / ATCC BAA-672) (Erwinia carotovora subsp. atroseptica), this protein is Deoxyribose-phosphate aldolase.